The chain runs to 304 residues: MQNFGKVAVLMGGFSSEREISLDSGTAILNALKSKGIDAYAFDPKETPLSELKAQGFQTAFNILHGTYGEDGAVQGALELLGIPYTGSGVAASAIGMDKYRCKLIWQALGLPVPEFAVLHDDTDFDAVEEKLGLPMFVKPAAEGSSVGVVKVKGKGRLKSVYEELKHFQGEIIAERFIGGGEYSCPVLNGKGLPGIHIIPATEFYDYEAKYNRNDTIYQCPSEDLTEAEESLMRELAVRGAQAIGAEGCVRVDFLKDTDGKLYLLEINTLPGMTGHSLVPKSAAVMGVGFADLCIEILKTAHVG.

The 197-residue stretch at 103 to 299 (KLIWQALGLP…FADLCIEILK (197 aa)) folds into the ATP-grasp domain. 129–184 (EEKLGLPMFVKPAAEGSSVGVVKVKGKGRLKSVYEELKHFQGEIIAERFIGGGEYS) contacts ATP. Asp-253, Glu-266, and Asn-268 together coordinate Mg(2+).

Belongs to the D-alanine--D-alanine ligase family. It depends on Mg(2+) as a cofactor. The cofactor is Mn(2+).

The protein localises to the cytoplasm. The catalysed reaction is 2 D-alanine + ATP = D-alanyl-D-alanine + ADP + phosphate + H(+). Its pathway is cell wall biogenesis; peptidoglycan biosynthesis. Functionally, cell wall formation. This is D-alanine--D-alanine ligase from Neisseria meningitidis serogroup A / serotype 4A (strain DSM 15465 / Z2491).